The sequence spans 365 residues: GTPase Obg (365 aa).

Residues 1 to 159 (MKFIDEARIE…RMLKLELKVL (159 aa)) enclose the Obg domain. In terms of domain architecture, OBG-type G spans 160-334 (ADVGLLGMPN…LIYAIKDHLQ (175 aa)). GTP is bound by residues 166-173 (GMPNAGKS), 191-195 (FTTLH), 213-216 (DIPG), 284-287 (NKLD), and 315-317 (SAL). Mg(2+)-binding residues include serine 173 and threonine 193.

Belongs to the TRAFAC class OBG-HflX-like GTPase superfamily. OBG GTPase family. As to quaternary structure, monomer. Requires Mg(2+) as cofactor.

The protein resides in the cytoplasm. In terms of biological role, an essential GTPase which binds GTP, GDP and possibly (p)ppGpp with moderate affinity, with high nucleotide exchange rates and a fairly low GTP hydrolysis rate. Plays a role in control of the cell cycle, stress response, ribosome biogenesis and in those bacteria that undergo differentiation, in morphogenesis control. This is GTPase Obg from Cupriavidus taiwanensis (strain DSM 17343 / BCRC 17206 / CCUG 44338 / CIP 107171 / LMG 19424 / R1) (Ralstonia taiwanensis (strain LMG 19424)).